The sequence spans 224 residues: MGILGWVGLIAVGVLCVRGGLSSTEYVIRSRVAREVGDILKVPCVPLPSDDLDWRYETPSAINYALIDGIFLRYHCPGLDTVLWDRHAQKAYWVNPFLFVAGFLEDLSHPAFPANTQETETRLALYKEIRQALDSRKQAASHTPVKAGCVNFDYSRTRRCVGRQDLGPTNGTSGRTPVLPPDDEAGLQPKPLTTPPPIIATSDPTPRRDAATKSRRRRPHSRRL.

The first 22 residues, 1–22, serve as a signal peptide directing secretion; that stretch reads MGILGWVGLIAVGVLCVRGGLS. Positions 20–161 are interaction with gH; the sequence is GLSSTEYVIR…FDYSRTRRCV (142 aa). The interval 20 to 161 is interaction with gL; it reads GLSSTEYVIR…FDYSRTRRCV (142 aa). One can recognise a gL alphaherpesvirus-type domain in the interval 23-201; sequence STEYVIRSRV…LTTPPPIIAT (179 aa). Intrachain disulfides connect C44-C76 and C149-C160. A disordered region spans residues 161–224; sequence VGRQDLGPTN…RRRRPHSRRL (64 aa). Residue N170 is glycosylated (N-linked (GlcNAc...) asparagine; by host). Residues 213–224 show a composition bias toward basic residues; the sequence is KSRRRRPHSRRL.

Belongs to the herpesviridae glycoprotein L (gL) family. Alphaherpesvirinae gL subfamily. Interacts with glycoprotein H (gH); this interaction is necessary for the correct processing and cell surface expression of gH. The heterodimer gH/gL seems to interact with gB trimers during fusion. In terms of processing, N-glycosylated, O-glycosylated, and sialylated.

The protein resides in the virion membrane. It localises to the host cell membrane. It is found in the host Golgi apparatus. The protein localises to the host trans-Golgi network. In terms of biological role, the heterodimer glycoprotein H-glycoprotein L is required for the fusion of viral and plasma membranes leading to virus entry into the host cell. Acts as a functional inhibitor of gH and maintains gH in an inhibited form. Upon binding to host integrins, gL dissociates from gH leading to activation of the viral fusion glycoproteins gB and gH. The chain is Envelope glycoprotein L from Human herpesvirus 1 (strain KOS) (HHV-1).